A 514-amino-acid polypeptide reads, in one-letter code: Retron Vc95 probable ATPase (514 aa).

The ATP-binding motif lies at 92–99; the sequence is GNNGSGKS.

Probable ATPase component of antiviral defense system retron Vc95, composed of a non-coding RNA (ncRNA), a reverse transcriptase (RT), this protein and a putative HNH endonuclease. Expression of retron Vc95 confers protection against bacteriophages T2, T4 and T6. At multiplicity of infection (MOI) of 0.02 cultures slow growth when infected with T4 but do not collapse, at MOI 2 cultures enter growth stasis. This chain is Retron Vc95 probable ATPase, found in Vibrio cholerae serotype O1 biovar El Tor.